We begin with the raw amino-acid sequence, 735 residues long: Ribosomal RNA large subunit methyltransferase K/L (735 aa).

Residues 45–156 form the THUMP domain; sequence DGYRACLWSR…RDSLSFSLDL (112 aa).

Belongs to the methyltransferase superfamily. RlmKL family.

The protein localises to the cytoplasm. The enzyme catalyses guanosine(2445) in 23S rRNA + S-adenosyl-L-methionine = N(2)-methylguanosine(2445) in 23S rRNA + S-adenosyl-L-homocysteine + H(+). It catalyses the reaction guanosine(2069) in 23S rRNA + S-adenosyl-L-methionine = N(2)-methylguanosine(2069) in 23S rRNA + S-adenosyl-L-homocysteine + H(+). In terms of biological role, specifically methylates the guanine in position 2445 (m2G2445) and the guanine in position 2069 (m7G2069) of 23S rRNA. This Allochromatium vinosum (strain ATCC 17899 / DSM 180 / NBRC 103801 / NCIMB 10441 / D) (Chromatium vinosum) protein is Ribosomal RNA large subunit methyltransferase K/L.